A 418-amino-acid polypeptide reads, in one-letter code: FK506-binding protein 3 (418 aa).

Disordered regions lie at residues 49–133 (PSTL…DDEF), 172–273 (SLTG…ETKK), and 289–309 (LEEGPTKKEEKKEEKKEKPKT). Positions 61-89 (YDDEDDAGGLLGDYDEDELDISEEEEEEE) are enriched in acidic residues. Residues 93-103 (KSKKGKGKGKS) are compositionally biased toward basic residues. 2 stretches are compositionally biased toward acidic residues: residues 108 to 133 (EEEEEEEEDEDEGDEELIEIDTDDEF) and 186 to 224 (GYDDEDDDEEDDESYDEDEDDYLTPDEEADLEELEDASD). Residues 225-239 (VEAKIQELVEKEQSK) are compositionally biased toward basic and acidic residues. Acidic residues predominate over residues 251–264 (PEEEEEEEEEEEEE). In terms of domain architecture, PPIase FKBP-type spans 332 to 418 (GSKVGMRYIG…TFDVKLVSLK (87 aa)).

This sequence belongs to the FKBP-type PPIase family. FKBP3/4 subfamily.

It localises to the nucleus. The protein localises to the nucleolus. The catalysed reaction is [protein]-peptidylproline (omega=180) = [protein]-peptidylproline (omega=0). Inhibited by both FK506 and rapamycin. Functionally, PPIases accelerate the folding of proteins. It catalyzes the cis-trans isomerization of proline imidic peptide bonds in oligopeptides. In Kluyveromyces lactis (strain ATCC 8585 / CBS 2359 / DSM 70799 / NBRC 1267 / NRRL Y-1140 / WM37) (Yeast), this protein is FK506-binding protein 3 (FPR3).